Reading from the N-terminus, the 643-residue chain is Phosphomethylpyrimidine synthase (643 aa).

Substrate is bound by residues asparagine 248, methionine 277, tyrosine 306, histidine 342, 362-364 (SRG), 403-406 (DGLR), and glutamate 442. Histidine 446 is a binding site for Zn(2+). A substrate-binding site is contributed by tyrosine 469. Residue histidine 510 coordinates Zn(2+). [4Fe-4S] cluster-binding residues include cysteine 590, cysteine 593, and cysteine 598.

It belongs to the ThiC family. As to quaternary structure, homodimer. The cofactor is [4Fe-4S] cluster.

The catalysed reaction is 5-amino-1-(5-phospho-beta-D-ribosyl)imidazole + S-adenosyl-L-methionine = 4-amino-2-methyl-5-(phosphooxymethyl)pyrimidine + CO + 5'-deoxyadenosine + formate + L-methionine + 3 H(+). Its pathway is cofactor biosynthesis; thiamine diphosphate biosynthesis. Its function is as follows. Catalyzes the synthesis of the hydroxymethylpyrimidine phosphate (HMP-P) moiety of thiamine from aminoimidazole ribotide (AIR) in a radical S-adenosyl-L-methionine (SAM)-dependent reaction. The polypeptide is Phosphomethylpyrimidine synthase (Burkholderia orbicola (strain MC0-3)).